Consider the following 452-residue polypeptide: cAMP-dependent protein kinase regulatory subunit (452 aa).

Residues 28 to 212 form a dimerization and phosphorylation region; the sequence is QFCANYFNSK…ELSKTLGSNF (185 aa). Residues 74–163 are disordered; that stretch reads IMTTNKRQPS…APPVPKSKIP (90 aa). Positions 75–84 are enriched in polar residues; that stretch reads MTTNKRQPSF. A compositionally biased stretch (basic and acidic residues) spans 95–106; it reads SIDHHHDDDPKE. S173 is modified (phosphoserine). Residues 213-330 and 333-451 contribute to the a nucleoside 3',5'-cyclic phosphate site; these read LFRQ…FLKD and VLSS…QGSS. 3',5'-cyclic AMP is bound by residues E278, R287, E399, and R408.

This sequence belongs to the cAMP-dependent kinase regulatory chain family. In terms of assembly, tetramer, composed of 2 regulatory (R) and 2 catalytic (C) subunits. In the presence of cAMP it dissociates into 2 active monomeric C subunits and an R dimer.

This Debaryomyces hansenii (strain ATCC 36239 / CBS 767 / BCRC 21394 / JCM 1990 / NBRC 0083 / IGC 2968) (Yeast) protein is cAMP-dependent protein kinase regulatory subunit (PKAR).